A 76-amino-acid polypeptide reads, in one-letter code: Large ribosomal subunit protein bL31 (76 aa).

Residues cysteine 16, cysteine 18, cysteine 36, and cysteine 39 each coordinate Zn(2+).

It belongs to the bacterial ribosomal protein bL31 family. Type A subfamily. As to quaternary structure, part of the 50S ribosomal subunit. It depends on Zn(2+) as a cofactor.

In terms of biological role, binds the 23S rRNA. This is Large ribosomal subunit protein bL31 from Syntrophobacter fumaroxidans (strain DSM 10017 / MPOB).